Reading from the N-terminus, the 1667-residue chain is MSLPFYQRSHQHYDLSYRNKDLRTTMSHYQQEKKRSAVYTHGSTAYSSRSLAARRQESEAFSQASATSYQQQASQTYSLGASSSSRHSQGSEVSRKTASAYDYGYSHGLTDSSLLLEDYSSKLSPQTKRAKRSLLSGEETGSLPGNYLVPIYSGRQVHISGIRDSEEERIKEAAAYIAQKTLLASEEAIAASKQSTASKQSATSKRTTSTLQREETFEKKSRNIAIREKAEELSLKKTLEETQTYHGKLNEDHLLHAPEFIIKPRSHTVWEKENVKLHCSVAGWPEPRLTWYKNQVPINVHANPGKYIIESRYGMHTLEISKCDFEDTAQYRASAMNVQGELSAYASVVVKRYKGELDESLLRGGVSMPLSFAVTPYGYASKFEIHFDDKFDVSFGREGETMSLGCRVVITPEIKHFQPEVQWYRNGAPVSPSKWVQPHWSGDRATLTFSHLNKEDEGLYTIRVRMGEYYEQYSAYVFVRDADAEIEGAPAAPLDVVSLDANKDYIIISWKQPAVDGGSPILGYFIDKCEVGTDTWSQCNDTPVKFARFPVTGLIEGRSYIFRVRAVNKTGIGLPSRVSEPVAALDPAEKARLKSHPSAPWTGQIIVTEEEPTEGVIPGPPTDLSVTEATRSYVVLSWKPPGQRGHEGIMYFVEKCDVGAENWQRVNTELPVKSPRFALFDLVEGKSYRFRVRCSNSAGVGEPSETTEVTVVGDKLDIPKAPGKIIPSRNTDTSVVVSWEESRDAKELVGYYIEASVVGSGKWEPCNNNPVKGSRFTCHGLTTAQSYIFRVRAVNAAGLSEYSQDSEAIEVKAAIGGGVSPDVWPQLSDTPGGLTDSRGGMNGASPPTSQKDALLGSNPNKPSPPSSPSSRGQKEVSTVSESVQEPLSSPPQEAAPEEEQSQSEPPKKKKDPVAVPSAPYDITCLESFRDSMVLGWKQPDTTGGAEITGYYVNYREVVGEVPGKWREANIKAVSDAAYKISNLKENTLYQFQVSAMNIAGLGAPSTVSECFKCEEWTIAVPGPPHSVKLSEVRKNSLVLQWKPPVYSGRTPVTGYFVDLKEASAKDDQWRGLNEAAIVNKYLRVQGLKEGTSYVFRVRAVNQAGVGKPSDLAGPVVAETRPGTKEVVVSVDDDGVISLNFECDQMTPKSEFVWSKDYVPTEDSPRLEVENKGDKTKMTFKDLGTDDLGTYSCDVTDTDGIASSYLIDEEEMKRLLALSQEHKFPTVPTKSELAVEILEKGQVRFWMQAEKLSSNAKVSYIFNEKEIFEGPKYKMHIDRNTGIIEMFMEKLQDEDEGTYTFQIQDGKATGHSTLVLIGDVYKKLQKEAEFQRQEWIRKQGPHFAEYLSWEVTGECNVLLKCKVANIKKETHIVWYKDEREISVDEKHDFKDGICTLLITEFSKKDAGFYEVILKDDRGKDKSRLKLVDEAFQDLMTEVCKKIALSATDLKIQSTAEGIRLYSFVCYYLDDLKVNWSHNGTGIKYTDRVKSGVTGEQIWLQINEPTPNDKGKYVMELFDGKTGHQKTVDLSGQAFDEAFAEFQRLKQAAIAEKNRARVLGGLPDVVTIQEGKALNLTCNVWGDPPPEVSWLKNEKPLTSDDHCSLKFEAGKTAFFTISGVSTADSGKYGLVVKNKYGSETSDFTVSVFIPEEELRKGAMEPPKGNQKSK.

Phosphoserine occurs at positions 124 and 142. The span at 192 to 210 shows a compositional bias: low complexity; the sequence is SKQSTASKQSATSKRTTST. The tract at residues 192 to 217 is disordered; that stretch reads SKQSTASKQSATSKRTTSTLQREETF. 2 consecutive Ig-like C2-type domains span residues 258 to 349 and 376 to 478; these read PEFI…ASVV and PYGY…AYVF. 3 consecutive Fibronectin type-III domains span residues 492–587, 620–714, and 721–814; these read APLD…ALDP, PPTD…VVGD, and APGK…VKAA. Positions 818 to 915 are disordered; it reads GVSPDVWPQL…PKKKKDPVAV (98 aa). Serine 863 and serine 867 each carry phosphoserine. Over residues 885-894 the composition is skewed to low complexity; sequence EPLSSPPQEA. Fibronectin type-III domains lie at 918-1016 and 1023-1122; these read APYD…CEEW and PPHS…TRPG. Phosphoserine is present on serine 1036. 3 Ig-like C2-type domains span residues 1114–1212, 1340–1426, and 1555–1644; these read PVVA…EEMK, PHFA…LKLV, and RVLG…FTVS.

As to quaternary structure, homodimer. Interacts with TTN/titin and PNKD. In terms of tissue distribution, ubiquitously expressed in all striated muscles. Expressed in all fiber types.

The protein localises to the cytoplasm. It localises to the myofibril. Its subcellular location is the sarcomere. The protein resides in the m line. In terms of biological role, may link the intermediate filament cytoskeleton to the M-disk of the myofibrils in striated muscle. May also contact myosin filaments. Also binds beta-integrins. The protein is Myomesin-1 (Myom1) of Mus musculus (Mouse).